The following is a 155-amino-acid chain: SsrA-binding protein (155 aa).

The protein belongs to the SmpB family.

Its subcellular location is the cytoplasm. Its function is as follows. Required for rescue of stalled ribosomes mediated by trans-translation. Binds to transfer-messenger RNA (tmRNA), required for stable association of tmRNA with ribosomes. tmRNA and SmpB together mimic tRNA shape, replacing the anticodon stem-loop with SmpB. tmRNA is encoded by the ssrA gene; the 2 termini fold to resemble tRNA(Ala) and it encodes a 'tag peptide', a short internal open reading frame. During trans-translation Ala-aminoacylated tmRNA acts like a tRNA, entering the A-site of stalled ribosomes, displacing the stalled mRNA. The ribosome then switches to translate the ORF on the tmRNA; the nascent peptide is terminated with the 'tag peptide' encoded by the tmRNA and targeted for degradation. The ribosome is freed to recommence translation, which seems to be the essential function of trans-translation. This Bacillus cereus (strain ATCC 10987 / NRS 248) protein is SsrA-binding protein.